A 200-amino-acid polypeptide reads, in one-letter code: Small ribosomal subunit protein mS26 (200 aa).

A mitochondrion-targeting transit peptide spans 1 to 27 (MLRALNRLAARPETRPPTPLLLPVRGR). A disordered region spans residues 1–44 (MLRALNRLAARPETRPPTPLLLPVRGRKTRHDPPAKSKVGRVQT). Lys159 carries the post-translational modification N6-acetyllysine.

Belongs to the mitochondrion-specific ribosomal protein mS26 family. As to quaternary structure, component of the mitochondrial ribosome small subunit (28S) which comprises a 12S rRNA and about 30 distinct proteins.

Its subcellular location is the mitochondrion. The chain is Small ribosomal subunit protein mS26 (Mrps26) from Mus musculus (Mouse).